The chain runs to 151 residues: Neuroglobin (151 aa).

The Globin domain maps to 1–149 (MERPEPELIR…VVQAMSRGWD (149 aa)). Heme b-binding residues include His-64 and His-96.

This sequence belongs to the globin family. In terms of assembly, monomer. Homodimer and homotetramer; disulfide-linked. Mainly monomeric but also detected as part of homodimers and homotetramers. Interacts with 14-3-3 proteins; regulates the phosphorylation of NGB. Could interact (ferrous form) with G-alpha(i) proteins (GTP-bound form). Post-translationally, phosphorylated during hypoxia by ERK1/ERK2. Phosphorylation regulates the heme pocket hexacoordination preventing the association of His-64 with the heme metal center. Thereby, promotes the access of dioxygen and nitrite to the heme and stimulates the nitrite reductase activity. Phosphorylation during hypoxia is stabilized by 14-3-3 proteins.

It is found in the cytoplasm. The protein localises to the cytosol. It localises to the mitochondrion matrix. It carries out the reaction Fe(III)-heme b-[protein] + nitric oxide + H2O = Fe(II)-heme b-[protein] + nitrite + 2 H(+). Functionally, monomeric globin with a bis-histidyl six-coordinate heme-iron atom through which it can bind dioxygen, carbon monoxide and nitric oxide. Could help transport oxygen and increase its availability to the metabolically active neuronal tissues, though its low quantity in tissues as well as its high affinity for dioxygen, which may limit its oxygen-releasing ability, argue against it. The ferrous/deoxygenated form exhibits a nitrite reductase activity and it could produce nitric oxide which in turn inhibits cellular respiration in response to hypoxia. In its ferrous/deoxygenated state, it may also exhibit GDI (Guanine nucleotide Dissociation Inhibitor) activity toward heterotrimeric G-alpha proteins, thereby regulating signal transduction to facilitate neuroprotective responses in the wake of hypoxia and associated oxidative stress. This chain is Neuroglobin, found in Macaca mulatta (Rhesus macaque).